The sequence spans 123 residues: UPF0102 protein PSHAa2523 (123 aa).

It belongs to the UPF0102 family.

In Pseudoalteromonas translucida (strain TAC 125), this protein is UPF0102 protein PSHAa2523.